Reading from the N-terminus, the 363-residue chain is Peptide chain release factor 1 (363 aa).

Glutamine 237 is subject to N5-methylglutamine. Residues 284-296 show a composition bias toward basic and acidic residues; the sequence is EDEKRRSAEESTR. The disordered stretch occupies residues 284–305; that stretch reads EDEKRRSAEESTRRSLVASGDR.

It belongs to the prokaryotic/mitochondrial release factor family. In terms of processing, methylated by PrmC. Methylation increases the termination efficiency of RF1.

The protein resides in the cytoplasm. Functionally, peptide chain release factor 1 directs the termination of translation in response to the peptide chain termination codons UAG and UAA. The polypeptide is Peptide chain release factor 1 (Shewanella baltica (strain OS185)).